A 249-amino-acid chain; its full sequence is MADADSWDADSFEPEEPIKKAAVHDKWEGEDEDDDVKDNWDDDEEEEKEEEEEKKTEAKPTEKKKLSEKIKEKENLQRKKQEELRKQQLEETKRDTPLTPEDELAEKLRVKQLQEDSDLELAKEAFGVVSNNVTGIDAVSPSSKDDFTEFERLLKEKISPYEKSIHYSGFLETLFRDLCLSLEVEDLKKINNSLTVLLSEKQRQEKANKGKKKKKGVLPGGGLKAKMKDDLADYGGFDGGYAQDYEDFM.

Residues 1–15 (MADADSWDADSFEPE) are compositionally biased toward acidic residues. A disordered region spans residues 1-104 (MADADSWDAD…DTPLTPEDEL (104 aa)). Over residues 16-27 (EPIKKAAVHDKW) the composition is skewed to basic and acidic residues. A compositionally biased stretch (acidic residues) spans 28–52 (EGEDEDDDVKDNWDDDEEEEKEEEE). The stretch at 34 to 96 (DDVKDNWDDD…QQLEETKRDT (63 aa)) forms a coiled coil. Over residues 53-96 (EKKTEAKPTEKKKLSEKIKEKENLQRKKQEELRKQQLEETKRDT) the composition is skewed to basic and acidic residues.

Belongs to the eIF-3 subunit J family. As to quaternary structure, component of the eukaryotic translation initiation factor 3 (eIF-3) complex, which is composed of 13 subunits: eif3a, eif3b, eif3c, eif3d, eif3e, eif3f, eif3g, eif3h, eif3i, eif3j, eif3k, eif3l and eif3m.

The protein localises to the cytoplasm. In terms of biological role, component of the eukaryotic translation initiation factor 3 (eIF-3) complex, which is involved in protein synthesis of a specialized repertoire of mRNAs and, together with other initiation factors, stimulates binding of mRNA and methionyl-tRNAi to the 40S ribosome. The eIF-3 complex specifically targets and initiates translation of a subset of mRNAs involved in cell proliferation. This is Eukaryotic translation initiation factor 3 subunit J-A (eif3ja) from Danio rerio (Zebrafish).